Here is a 346-residue protein sequence, read N- to C-terminus: Selenoprotein V (346 aa).

Disordered stretches follow at residues 1–40 and 151–206; these read MNNQ…VRTR and LDPP…PGPT. The segment covering 151 to 162 has biased composition (pro residues); it reads LDPPPEPAPELP. A cross-link (cysteinyl-selenocysteine (Cys-Sec); redox-active) is located at residues 270–273; sequence CGLU. Position 273 (U273) is a non-standard amino acid, selenocysteine.

It belongs to the SelWTH family. Post-translationally, truncated SELENOV proteins produced by failed UGA/Sec decoding are ubiquitinated by the CRL2(APPBP2) complex, which recognizes the glycine (Gly) at the C-terminus of truncated SELENOV proteins. As to expression, testis specific.

May be involved in a redox-related process. The protein is Selenoprotein V of Homo sapiens (Human).